Consider the following 1134-residue polypeptide: Phytochrome 1 (1134 aa).

The 183-residue stretch at 219-401 (DIGLLCDTVV…VFGLQLNMEA (183 aa)) folds into the GAF domain. C324 contributes to the phytochromobilin binding site. A PAS 1 domain is found at 616–687 (VANEMVRLIE…RLLYLALQGD (72 aa)). The PAC domain occupies 690-746 (QNVELKLKTFGGQKDKEAVILVVNACASRDVSDNVVGVCFVGQDVTGQKVVMDKFTR). A PAS 2 domain is found at 750–821 (DYKAIVQNPN…KGQDAVTKFM (72 aa)). The 221-residue stretch at 901-1121 (YIRQEIKNPL…LVSLELPLAQ (221 aa)) folds into the Histidine kinase domain.

Belongs to the phytochrome family. In terms of assembly, homodimer. Post-translationally, contains one covalently linked phytochromobilin chromophore.

In terms of biological role, regulatory photoreceptor which exists in two forms that are reversibly interconvertible by light: the Pr form that absorbs maximally in the red region of the spectrum and the Pfr form that absorbs maximally in the far-red region. Photoconversion of Pr to Pfr induces an array of morphogenic responses, whereas reconversion of Pfr to Pr cancels the induction of those responses. Pfr controls the expression of a number of nuclear genes including those encoding the small subunit of ribulose-bisphosphate carboxylase, chlorophyll A/B binding protein, protochlorophyllide reductase, rRNA, etc. It also controls the expression of its own gene(s) in a negative feedback fashion. The chain is Phytochrome 1 (PHY1) from Selaginella martensii (Martens's spike moss).